The sequence spans 25 residues: Antimicrobial peptide 3 (25 aa).

As to expression, skin.

The protein resides in the secreted. In terms of biological role, has antibacterial activity against Gram-positive bacterium S.aureus and Gram-negative bacterium E.coli, when in combination with XT1 and XT6. The polypeptide is Antimicrobial peptide 3 (Xenopus tropicalis (Western clawed frog)).